Here is a 1465-residue protein sequence, read N- to C-terminus: DNA polymerase III PolC-type (1465 aa).

Positions 427 to 583 constitute an Exonuclease domain; that stretch reads YVVFDVETTG…YDAEATGRLL (157 aa).

This sequence belongs to the DNA polymerase type-C family. PolC subfamily.

Its subcellular location is the cytoplasm. The catalysed reaction is DNA(n) + a 2'-deoxyribonucleoside 5'-triphosphate = DNA(n+1) + diphosphate. In terms of biological role, required for replicative DNA synthesis. This DNA polymerase also exhibits 3' to 5' exonuclease activity. This Streptococcus pyogenes serotype M12 (strain MGAS2096) protein is DNA polymerase III PolC-type.